The sequence spans 246 residues: UDP-N-acetyl-D-mannosaminuronic acid transferase (246 aa).

Belongs to the glycosyltransferase 26 family.

It carries out the reaction UDP-N-acetyl-alpha-D-mannosaminouronate + N-acetyl-alpha-D-glucosaminyl-di-trans,octa-cis-undecaprenyl diphosphate = beta-D-ManNAcA-(1-&gt;4)-alpha-D-GlcNAc-di-trans,octa-cis-undecaprenyl diphosphate + UDP + H(+). Its pathway is bacterial outer membrane biogenesis; enterobacterial common antigen biosynthesis. Its function is as follows. Catalyzes the synthesis of Und-PP-GlcNAc-ManNAcA (Lipid II), the second lipid-linked intermediate involved in enterobacterial common antigen (ECA) synthesis. This Salmonella agona (strain SL483) protein is UDP-N-acetyl-D-mannosaminuronic acid transferase.